A 702-amino-acid polypeptide reads, in one-letter code: Lipase maturation factor 2 (702 aa).

Helical transmembrane passes span leucine 10–isoleucine 30, alanine 75–leucine 95, aspartate 164–valine 184, leucine 226–isoleucine 246, leucine 259–valine 279, leucine 316–leucine 336, valine 363–leucine 383, and alanine 398–valine 418. Asparagine 488 carries N-linked (GlcNAc...) asparagine glycosylation. Residues isoleucine 636–alanine 656 form a helical membrane-spanning segment. Positions leucine 660–lysine 702 are disordered. Basic and acidic residues predominate over residues glutamine 665 to alanine 681. Positions alanine 682–arginine 693 are enriched in low complexity.

Belongs to the lipase maturation factor family.

Its subcellular location is the endoplasmic reticulum membrane. Functionally, involved in the maturation of specific proteins in the endoplasmic reticulum. May be required for maturation and transport of active lipoprotein lipase (LPL) through the secretory pathway. This chain is Lipase maturation factor 2 (Lmf2), found in Mus musculus (Mouse).